The primary structure comprises 122 residues: MIQMQTQLEVADNSGARKVQCIKVLGGSHRRYAAIGDIIKVSVKEAIPRGKVKKGDVKNAVVVRTKKGVRRPDGSLIRFDSNAAVILNDNLQPIGTRIFGPVTRELRNDKFMKIVSLAPEVL.

This sequence belongs to the universal ribosomal protein uL14 family. As to quaternary structure, part of the 50S ribosomal subunit. Forms a cluster with proteins L3 and L19. In the 70S ribosome, L14 and L19 interact and together make contacts with the 16S rRNA in bridges B5 and B8.

Functionally, binds to 23S rRNA. Forms part of two intersubunit bridges in the 70S ribosome. This chain is Large ribosomal subunit protein uL14, found in Pseudoalteromonas translucida (strain TAC 125).